The following is a 432-amino-acid chain: Adenylosuccinate synthetase (432 aa).

Residues 13-19 (GDEGKGK) and 41-43 (GHT) contribute to the GTP site. D14 functions as the Proton acceptor in the catalytic mechanism. The Mg(2+) site is built by D14 and G41. IMP-binding positions include 14-17 (DEGK), 39-42 (NAGH), T130, R144, Q225, T240, and R304. The active-site Proton donor is H42. Substrate is bound at residue 300 to 306 (ATTGRRR). Residues R306, 332 to 334 (KLD), and 415 to 417 (STG) contribute to the GTP site.

Belongs to the adenylosuccinate synthetase family. In terms of assembly, homodimer. It depends on Mg(2+) as a cofactor.

The protein localises to the cytoplasm. The enzyme catalyses IMP + L-aspartate + GTP = N(6)-(1,2-dicarboxyethyl)-AMP + GDP + phosphate + 2 H(+). It participates in purine metabolism; AMP biosynthesis via de novo pathway; AMP from IMP: step 1/2. Its function is as follows. Plays an important role in the de novo pathway of purine nucleotide biosynthesis. Catalyzes the first committed step in the biosynthesis of AMP from IMP. The sequence is that of Adenylosuccinate synthetase from Enterobacter sp. (strain 638).